The following is a 414-amino-acid chain: Putative F-box/kelch-repeat protein At1g20940 (414 aa).

The region spanning 13–65 (SSIINDLPLDLLDEILFRLEPKSMAMMRCTNNSIKSYLSDPRFGPEYPSWVRP) is the F-box domain. Kelch repeat units follow at residues 281–328 (LTLI…MYDG) and 331–378 (LVVR…KLTP).

Interacts with DEK3.

It functions in the pathway protein modification; protein ubiquitination. Probable component of an E3 ubiquitin ligase complex. The sequence is that of Putative F-box/kelch-repeat protein At1g20940 from Arabidopsis thaliana (Mouse-ear cress).